A 447-amino-acid chain; its full sequence is Na(+)-translocating NADH-quinone reductase subunit A (447 aa).

Belongs to the NqrA family. In terms of assembly, composed of six subunits; NqrA, NqrB, NqrC, NqrD, NqrE and NqrF.

The enzyme catalyses a ubiquinone + n Na(+)(in) + NADH + H(+) = a ubiquinol + n Na(+)(out) + NAD(+). NQR complex catalyzes the reduction of ubiquinone-1 to ubiquinol by two successive reactions, coupled with the transport of Na(+) ions from the cytoplasm to the periplasm. NqrA to NqrE are probably involved in the second step, the conversion of ubisemiquinone to ubiquinol. The chain is Na(+)-translocating NADH-quinone reductase subunit A from Hahella chejuensis (strain KCTC 2396).